The following is a 236-amino-acid chain: Biosynthetic peptidoglycan transglycosylase (236 aa).

The helical transmembrane segment at 20 to 40 (GLVVAAVLALIPTMLTFLYLP) threads the bilayer.

It belongs to the glycosyltransferase 51 family.

It localises to the cell inner membrane. The enzyme catalyses [GlcNAc-(1-&gt;4)-Mur2Ac(oyl-L-Ala-gamma-D-Glu-L-Lys-D-Ala-D-Ala)](n)-di-trans,octa-cis-undecaprenyl diphosphate + beta-D-GlcNAc-(1-&gt;4)-Mur2Ac(oyl-L-Ala-gamma-D-Glu-L-Lys-D-Ala-D-Ala)-di-trans,octa-cis-undecaprenyl diphosphate = [GlcNAc-(1-&gt;4)-Mur2Ac(oyl-L-Ala-gamma-D-Glu-L-Lys-D-Ala-D-Ala)](n+1)-di-trans,octa-cis-undecaprenyl diphosphate + di-trans,octa-cis-undecaprenyl diphosphate + H(+). It participates in cell wall biogenesis; peptidoglycan biosynthesis. In terms of biological role, peptidoglycan polymerase that catalyzes glycan chain elongation from lipid-linked precursors. This Mesorhizobium japonicum (strain LMG 29417 / CECT 9101 / MAFF 303099) (Mesorhizobium loti (strain MAFF 303099)) protein is Biosynthetic peptidoglycan transglycosylase.